Consider the following 513-residue polypeptide: ATP synthase subunit alpha (513 aa).

169 to 176 contacts ATP; that stretch reads GDRQIGKT.

The protein belongs to the ATPase alpha/beta chains family. F-type ATPases have 2 components, CF(1) - the catalytic core - and CF(0) - the membrane proton channel. CF(1) has five subunits: alpha(3), beta(3), gamma(1), delta(1), epsilon(1). CF(0) has three main subunits: a(1), b(2) and c(9-12). The alpha and beta chains form an alternating ring which encloses part of the gamma chain. CF(1) is attached to CF(0) by a central stalk formed by the gamma and epsilon chains, while a peripheral stalk is formed by the delta and b chains.

It is found in the cell inner membrane. The enzyme catalyses ATP + H2O + 4 H(+)(in) = ADP + phosphate + 5 H(+)(out). Produces ATP from ADP in the presence of a proton gradient across the membrane. The alpha chain is a regulatory subunit. The protein is ATP synthase subunit alpha of Shewanella halifaxensis (strain HAW-EB4).